The chain runs to 410 residues: Argininosuccinate synthase (410 aa).

Residues 14–22 (AYSGGLDTS) and Ala41 each bind ATP. The L-citrulline site is built by Tyr92 and Ser97. Gly122 is an ATP binding site. Positions 124, 128, and 129 each coordinate L-aspartate. Asn128 provides a ligand contact to L-citrulline. L-citrulline is bound by residues Arg132, Ser183, Ser192, Glu268, and Tyr280.

It belongs to the argininosuccinate synthase family. Type 1 subfamily. In terms of assembly, homotetramer.

Its subcellular location is the cytoplasm. It catalyses the reaction L-citrulline + L-aspartate + ATP = 2-(N(omega)-L-arginino)succinate + AMP + diphosphate + H(+). The protein operates within amino-acid biosynthesis; L-arginine biosynthesis; L-arginine from L-ornithine and carbamoyl phosphate: step 2/3. The polypeptide is Argininosuccinate synthase (Parvibaculum lavamentivorans (strain DS-1 / DSM 13023 / NCIMB 13966)).